Here is a 122-residue protein sequence, read N- to C-terminus: Large ribosomal subunit protein uL14c (122 aa).

Belongs to the universal ribosomal protein uL14 family. In terms of assembly, part of the 50S ribosomal subunit.

It localises to the plastid. Binds to 23S rRNA. This is Large ribosomal subunit protein uL14c from Euglena longa (Euglenophycean alga).